Here is a 303-residue protein sequence, read N- to C-terminus: Glycine--tRNA ligase alpha subunit (303 aa).

The protein belongs to the class-II aminoacyl-tRNA synthetase family. Tetramer of two alpha and two beta subunits.

The protein resides in the cytoplasm. It catalyses the reaction tRNA(Gly) + glycine + ATP = glycyl-tRNA(Gly) + AMP + diphosphate. This Escherichia coli (strain K12) protein is Glycine--tRNA ligase alpha subunit (glyQ).